The chain runs to 618 residues: uncharacterized protein (618 aa).

Residues 1–29 (MSFLVLPPEVNSALMFAGAGSGPTLAAAA) form the signal peptide. The segment at 598-618 (SGDNSSGGFNAGNDQSGFFDG) is disordered.

This sequence belongs to the mycobacterial PPE family.

This is an uncharacterized protein from Mycobacterium tuberculosis (strain ATCC 25618 / H37Rv).